The sequence spans 1062 residues: Valine--tRNA ligase, mitochondrial (1062 aa).

The transit peptide at 1–15 (MPHLPLASFRPPLRG) directs the protein to the mitochondrion. Positions 1 to 73 (MPHLPLASFR…AKGKPPAEST (73 aa)) are disordered. Over residues 42-56 (RNREAKQKRLREKQA) the composition is skewed to basic and acidic residues. Positions 146-156 (PNVTGSLHIGH) match the 'HIGH' region motif. The 'KMSKS' region motif lies at 659 to 663 (KMSKS). Position 662 (lysine 662) interacts with ATP.

This sequence belongs to the class-I aminoacyl-tRNA synthetase family.

Its subcellular location is the mitochondrion. The enzyme catalyses tRNA(Val) + L-valine + ATP = L-valyl-tRNA(Val) + AMP + diphosphate. In terms of biological role, catalyzes the attachment of valine to tRNA(Val) in a two-step reaction: valine is first activated by ATP to form Val-AMP and then transferred to the acceptor end of tRNA(Val). In Sus scrofa (Pig), this protein is Valine--tRNA ligase, mitochondrial (VARS2).